Here is a 142-residue protein sequence, read N- to C-terminus: Large ribosomal subunit protein bL17 (142 aa).

It belongs to the bacterial ribosomal protein bL17 family. Part of the 50S ribosomal subunit. Contacts protein L32.

This chain is Large ribosomal subunit protein bL17, found in Chlamydia abortus (strain DSM 27085 / S26/3) (Chlamydophila abortus).